A 274-amino-acid polypeptide reads, in one-letter code: MMPLLLLILLSTRNLLGAAQSQESPVAGERRALDLTTVYVLPRSEPINATVEHKCREALASCYNGSEFQPLHDDGPIRPDPYRFSTMIRFKRSYGELPLPIELNDEFLEQLSLLHNNTDQLRVLLTLMRTSRASDWMSFLGGYTQCDAPKSVVFTCVESVCYEHDLMRLNYTTDLFTENVLGLDVSPPVLSVLVLLRNNHTKAESVVRVPTSSMSLLDGTYNLLRTILGHMSLDTDLIGVLRSYRDRFPAVFSVSDQIKITRQHYRPQYQRKRP.

Positions 1–21 (MMPLLLLILLSTRNLLGAAQS) are cleaved as a signal peptide. The region spanning 51–251 (VEHKCREALA…RSYRDRFPAV (201 aa)) is the gL betaherpesvirus-type domain. An intrachain disulfide couples Cys156 to Cys161.

It belongs to the herpesviridae glycoprotein L (gL) family. Betaherpesvirinae gL subfamily. Interacts with glycoprotein H (gH); this interaction is necessary for the correct processing and cell surface expression of gH.

It is found in the virion membrane. Its subcellular location is the host cell membrane. The protein resides in the host Golgi apparatus. The protein localises to the host trans-Golgi network. In terms of biological role, the heterodimer glycoprotein H-glycoprotein L is required for the fusion of viral and plasma membranes leading to virus entry into the host cell. Acts as a functional inhibitor of gH and maintains gH in an inhibited form. Upon binding to host integrins, gL dissociates from gH leading to activation of the viral fusion glycoproteins gB and gH. The protein is Envelope glycoprotein L of Murid herpesvirus 1 (strain Smith) (MuHV-1).